The primary structure comprises 37 residues: Large ribosomal subunit protein bL36 (37 aa).

The protein belongs to the bacterial ribosomal protein bL36 family.

This chain is Large ribosomal subunit protein bL36, found in Pelotomaculum thermopropionicum (strain DSM 13744 / JCM 10971 / SI).